We begin with the raw amino-acid sequence, 166 residues long: Small ribosomal subunit protein uS5 (166 aa).

Residues 11-74 form the S5 DRBM domain; it reads LREKLVAINR…EKARANMKRV (64 aa).

Belongs to the universal ribosomal protein uS5 family. As to quaternary structure, part of the 30S ribosomal subunit. Contacts proteins S4 and S8.

Functionally, with S4 and S12 plays an important role in translational accuracy. Its function is as follows. Located at the back of the 30S subunit body where it stabilizes the conformation of the head with respect to the body. The protein is Small ribosomal subunit protein uS5 of Alkalilimnicola ehrlichii (strain ATCC BAA-1101 / DSM 17681 / MLHE-1).